Consider the following 769-residue polypeptide: Probable protease Ga0334635_1659 (769 aa).

The tract at residues V118 to L167 is disordered.

Functionally, probably a dedicated protease for substrate gasdermin bGSDM; cleaves the bGSDM precursor, releasing the pore-forming moiety, which integrates into the membrane and triggers cell death. Involved in defense against bacteriophages. Expression of gasdermin bGSDM and this neighboring protease is toxic in E.coli. This chain is Probable protease Ga0334635_1659, found in Vitiosangium sp. (strain GDMCC 1.1324).